We begin with the raw amino-acid sequence, 493 residues long: Cobyric acid synthase (493 aa).

Residues 261 to 455 (HTRIAVVAYP…LHGLFEDAAV (195 aa)) form the GATase cobBQ-type domain. Cys342 functions as the Nucleophile in the catalytic mechanism. His447 is a catalytic residue.

Belongs to the CobB/CobQ family. CobQ subfamily.

It functions in the pathway cofactor biosynthesis; adenosylcobalamin biosynthesis. In terms of biological role, catalyzes amidations at positions B, D, E, and G on adenosylcobyrinic A,C-diamide. NH(2) groups are provided by glutamine, and one molecule of ATP is hydrogenolyzed for each amidation. The sequence is that of Cobyric acid synthase from Acidovorax sp. (strain JS42).